The primary structure comprises 135 residues: Histone H3 type 2 (135 aa).

Residues 1–40 (MARTKQTARKSTGGKAPRKQLATKAARKTPATGGVKKPHR) form a disordered region. An N6-methyllysine modification is found at Lys-5. The residue at position 10 (Lys-10) is an N6-acetyllysine; alternate. Lys-10 bears the N6-methyllysine; alternate mark. A Phosphoserine modification is found at Ser-11. A Phosphothreonine modification is found at Thr-12. 3 positions are modified to N6-acetyllysine: Lys-15, Lys-19, and Lys-24. Lys-28 bears the N6-acetyllysine; alternate mark. Lys-28 is subject to N6-methyllysine; alternate. Lys-36 and Lys-37 each carry N6-methyllysine.

It belongs to the histone H3 family. As to quaternary structure, the nucleosome is a histone octamer containing two molecules each of H2A, H2B, H3 and H4 assembled in one H3-H4 heterotetramer and two H2A-H2B heterodimers. The octamer wraps approximately 147 bp of DNA. Acetylation is generally linked to gene activation. Acetylated to form H3K9ac (11%), H3K14ac (17%), H3K18ac (11%), H3K23ac (16%) and H3K27ac (7%). H3K4, H3K35 and H3K36 are not acetylated. H3K4me prevents acetylation. 32% of the histone H3 are acetylated with, on average, 2.4 acetyl-Lys. They are all continuously deacatylated and re-acetylated with a half-life of approximately 2 minutes. In terms of processing, monomethylated to form H3K4me1 (81%), H3K9me1 (16%), H3K27me1 (25%), H3K35me1 (25%) and H3K36me1 (5%). No methylation at H3K14, H3K18 and H3K23. Methylated by a protein complex that includes Mut11. Set1 methylates specifically H3K4. H3K4me1 is associated with silenced euchromatin. Set3 forms H3K9me1, while H3K9me2 is undetected. H3K9me1 is specifically associated with silent, multi-copy transgenes. Post-translationally, no phosphorylation detected.

The protein resides in the nucleus. It is found in the chromosome. Functionally, core component of nucleosome. Nucleosomes wrap and compact DNA into chromatin, limiting DNA accessibility to the cellular machineries which require DNA as a template. Histones thereby play a central role in transcription regulation, DNA repair, DNA replication and chromosomal stability. DNA accessibility is regulated via a complex set of post-translational modifications of histones, also called histone code, and nucleosome remodeling. The sequence is that of Histone H3 type 2 (ch3-II) from Chlamydomonas reinhardtii (Chlamydomonas smithii).